The chain runs to 134 residues: Crustacean hyperglycemic hormones isoform B (134 aa).

Positions 1–24 (MFACRTLCLVVVMVASLGTSGVGG) are cleaved as a signal peptide. Gln-61 carries the post-translational modification Pyrrolidone carboxylic acid. Residue Phe-63 is modified to D-phenylalanine; in form CHH-B-II. Disulfide bonds link Cys-67–Cys-103, Cys-83–Cys-99, and Cys-86–Cys-112. Val-132 carries the post-translational modification Valine amide.

Belongs to the arthropod CHH/MIH/GIH/VIH hormone family. Stereoinversion of L-Phe (form CHH-B-I) to D-Phe (form CHH-B-II). As to expression, produced by the medulla terminalis X-organ in the eyestalks and transported to the sinus gland where they are stored and released. Present also in the ventral nervous system.

The protein localises to the secreted. Functionally, hormone found in the sinus gland of isopods and decapods which controls the blood sugar level. Has a secretagogue action over the amylase released from the midgut gland. May act as a stress hormone and may be involved in the control of molting and reproduction. In Homarus americanus (American lobster), this protein is Crustacean hyperglycemic hormones isoform B.